The sequence spans 941 residues: Peroxisomal ATPase PEX6 (941 aa).

ATP is bound by residues G384 to R391 and G698 to T705.

Belongs to the AAA ATPase family. As to quaternary structure, interacts with PEX1; forming the PEX1-PEX6 AAA ATPase complex, which is composed of a heterohexamer formed by a trimer of PEX1-PEX6 dimers. Interacts with APME9.

The protein resides in the cytoplasm. It localises to the cytosol. It is found in the peroxisome membrane. It catalyses the reaction ATP + H2O = ADP + phosphate + H(+). Component of the PEX1-PEX6 AAA ATPase complex, a protein dislocase complex that mediates the ATP-dependent extraction of the PEX5 receptor from peroxisomal membranes, an essential step for PEX5 recycling. Specifically recognizes PEX5 monoubiquitinated at 'Cys-11', and pulls it out of the peroxisome lumen through the PEX2-PEX10-PEX12 retrotranslocation channel. Extraction by the PEX1-PEX6 AAA ATPase complex is accompanied by unfolding of the TPR repeats and release of bound cargo from PEX5. Required for jasmonate biosynthesis. Necessary for the developmental elimination of obsolete peroxisome matix proteins. In Arabidopsis thaliana (Mouse-ear cress), this protein is Peroxisomal ATPase PEX6.